The primary structure comprises 111 residues: uncharacterized protein (111 aa).

This is an uncharacterized protein from Ureaplasma parvum serovar 3 (strain ATCC 700970).